We begin with the raw amino-acid sequence, 306 residues long: MSSKQTQLKKGKQPSWIEIYLPKEVRPYAHLARLDKPIGSWLLAWPAFWSVALIADLGSLPKMLAIFGWWAVWIRGAGCTINDYFDRDFDKKVERTKSRPLASGAVSPAKGLWWLAFQLFIGLGVLYQFNILTLALAIVHVPFVFAYPLMKRITYWPQAFLGVMISWGALLGSSALKGSVVPSIAYPLYISSFFWTLVYDTIYAHQDKVDDAKAGIKSTALRFGDATKIWITWFGIGCIGALLLGGFIVNIGLPYYVFLAIATGQLIWQIFTVDLSSPMDCGKKFVSNQWFGAIIFTGILVGRLFP.

The next 8 helical transmembrane spans lie at 38–58 (IGSWLLAWPAFWSVALIADLG), 61–81 (PKMLAIFGWWAVWIRGAGCTI), 119–139 (LFIGLGVLYQFNILTLALAIV), 153–173 (ITYWPQAFLGVMISWGALLGS), 178–198 (GSVVPSIAYPLYISSFFWTLV), 229–249 (IWITWFGIGCIGALLLGGFIV), 251–271 (IGLPYYVFLAIATGQLIWQIF), and 285–305 (FVSNQWFGAIIFTGILVGRLF).

The protein belongs to the UbiA prenyltransferase family. The cofactor is Mg(2+). Expressed only in roots.

Its subcellular location is the endoplasmic reticulum membrane. It catalyses the reaction 4-hydroxybenzoate + (2E)-geranyl diphosphate = 3-geranyl-4-hydroxybenzoate + diphosphate. Its function is as follows. Prenyltransferase involved in the biosynthesis of shikonin, a naphthoquinone secondary metabolite. Could accept only geranyl diphosphate and not dimethylallyl diphosphate, farnesyl diphosphate, or geranylgeranyl diphosphate as substrate. The polypeptide is 4-hydroxybenzoate geranyltransferase 2 (PGT-2) (Lithospermum erythrorhizon (Purple gromwell)).